The primary structure comprises 511 residues: Archaeal glutamate synthase [NADPH] (511 aa).

4Fe-4S ferredoxin-type domains are found at residues 15-44 (FMIE…YDEE) and 46-75 (DMMR…VKPH). Residues C24, C27, C30, C34, C55, C58, C61, and C65 each contribute to the [4Fe-4S] cluster site.

This sequence belongs to the glutamate synthase family. Requires FMN as cofactor.

It carries out the reaction 2 L-glutamate + NADP(+) = L-glutamine + 2-oxoglutarate + NADPH + H(+). The sequence is that of Archaeal glutamate synthase [NADPH] from Archaeoglobus fulgidus (strain ATCC 49558 / DSM 4304 / JCM 9628 / NBRC 100126 / VC-16).